Here is a 128-residue protein sequence, read N- to C-terminus: uncharacterized protein (128 aa).

Its subcellular location is the mitochondrion. This is an uncharacterized protein from Saccharomyces cerevisiae (strain ATCC 204508 / S288c) (Baker's yeast).